A 292-amino-acid polypeptide reads, in one-letter code: 33 kDa chaperonin (292 aa).

2 disulfides stabilise this stretch: C238-C240 and C271-C274.

This sequence belongs to the HSP33 family. Post-translationally, under oxidizing conditions two disulfide bonds are formed involving the reactive cysteines. Under reducing conditions zinc is bound to the reactive cysteines and the protein is inactive.

Its subcellular location is the cytoplasm. Functionally, redox regulated molecular chaperone. Protects both thermally unfolding and oxidatively damaged proteins from irreversible aggregation. Plays an important role in the bacterial defense system toward oxidative stress. The chain is 33 kDa chaperonin from Alkaliphilus metalliredigens (strain QYMF).